The chain runs to 54 residues: Snake venom 5'-nucleotidase (54 aa).

Asp11 and His13 together coordinate Zn(2+). N-linked (GlcNAc...) asparagine glycosylation occurs at Asn46.

The protein belongs to the 5'-nucleotidase family. Zn(2+) serves as cofactor. In terms of processing, venom 5'-nucleotidases (or a part thereof) may be released into the venom via exosome-like vesicles. They may be attached via a GPI anchor to the membrane of these vesicles. Soluble forms of 5'-nucleotidase might be released by cleavage of the ectodomain in the exosome-like vesicles or venom gland cells. As to expression, expressed by the venom gland.

It localises to the membrane. It catalyses the reaction a ribonucleoside 5'-phosphate + H2O = a ribonucleoside + phosphate. In terms of biological role, hydrolyzes nucleotides into nucleosides. Snake venom 5'-nucleotidases are widely distributed among venomous snake taxa, but there is a lack of information about their biological activities. They have been shown to inhibit platelet aggregation. This effect may be due to the liberation of inhibitory AMP or adenosine by its action on ADP released upon initiation of aggregation. Venom 5'-nucleotidases are also known to synergistically act in vivo with other toxins like ADPases, phospholipases, and disintegrins to exert a more pronounced anti-coagulant effect. The sequence is that of Snake venom 5'-nucleotidase from Gloydius blomhoffii blomhoffii (Japanese mamushi).